Here is a 266-residue protein sequence, read N- to C-terminus: Probable septum site-determining protein MinC (266 aa).

Residues 98-146 (ILKGGRPVSDVDVPKVEPESPPAEEKKKTGKATKASGKSDEIGETDSPQ) are disordered. Residues 109–124 (DVPKVEPESPPAEEKK) are compositionally biased toward basic and acidic residues.

The protein belongs to the MinC family. In terms of assembly, interacts with MinD and FtsZ.

In terms of biological role, cell division inhibitor that blocks the formation of polar Z ring septums. Rapidly oscillates between the poles of the cell to destabilize FtsZ filaments that have formed before they mature into polar Z rings. Prevents FtsZ polymerization. The polypeptide is Probable septum site-determining protein MinC (Allorhizobium ampelinum (strain ATCC BAA-846 / DSM 112012 / S4) (Agrobacterium vitis (strain S4))).